Here is a 516-residue protein sequence, read N- to C-terminus: Glucose-1-phosphate adenylyltransferase large subunit 1, chloroplastic/amyloplastic (516 aa).

Residues 1 to 45 (MQFALALDTNSGPHQIRSCEGDGIDRLEKLSIGGRKQEKALRNRC) constitute a chloroplast transit peptide.

It belongs to the bacterial/plant glucose-1-phosphate adenylyltransferase family. In terms of assembly, heterotetramer. Endosperm.

Its subcellular location is the plastid. The protein localises to the chloroplast. It localises to the amyloplast. The enzyme catalyses alpha-D-glucose 1-phosphate + ATP + H(+) = ADP-alpha-D-glucose + diphosphate. Its pathway is glycan biosynthesis; starch biosynthesis. Its activity is regulated as follows. Activated by 3'phosphoglycerate, inhibited by orthophosphate. Allosteric regulation. Its function is as follows. This protein plays a role in synthesis of starch. It catalyzes the synthesis of the activated glycosyl donor, ADP-glucose from Glc-1-P and ATP. This Zea mays (Maize) protein is Glucose-1-phosphate adenylyltransferase large subunit 1, chloroplastic/amyloplastic (SH2).